Consider the following 240-residue polypeptide: Late expression factor 5 homolog (240 aa).

It belongs to the baculoviridae LEF-5 family.

Required for late and very late gene expression. The protein is Late expression factor 5 homolog of Tortricidae (ClGV).